The chain runs to 188 residues: Protein-export protein SecB (188 aa).

Disordered stretches follow at residues 1–21 and 160–188; these read MADEQPQGNGQGAAQQGEQPK and RQKAEQAQGGGAEAKGSDSTAAQGSDTQQ. A compositionally biased stretch (polar residues) spans 176 to 188; that stretch reads SDSTAAQGSDTQQ.

Belongs to the SecB family. As to quaternary structure, homotetramer, a dimer of dimers. One homotetramer interacts with 1 SecA dimer.

The protein localises to the cytoplasm. Functionally, one of the proteins required for the normal export of preproteins out of the cell cytoplasm. It is a molecular chaperone that binds to a subset of precursor proteins, maintaining them in a translocation-competent state. It also specifically binds to its receptor SecA. This chain is Protein-export protein SecB, found in Alkalilimnicola ehrlichii (strain ATCC BAA-1101 / DSM 17681 / MLHE-1).